The following is a 108-amino-acid chain: UPF0060 membrane protein KPN78578_15550 (108 aa).

4 helical membrane-spanning segments follow: residues Leu-6 to Leu-26, Gly-29 to Leu-49, Ala-61 to Val-81, and Tyr-86 to Gly-106.

The protein belongs to the UPF0060 family.

It is found in the cell inner membrane. This chain is UPF0060 membrane protein KPN78578_15550, found in Klebsiella pneumoniae subsp. pneumoniae (strain ATCC 700721 / MGH 78578).